A 91-amino-acid chain; its full sequence is DNA-directed RNA polymerase subunit omega (91 aa).

The protein belongs to the RNA polymerase subunit omega family. The RNAP catalytic core consists of 2 alpha, 1 beta, 1 beta' and 1 omega subunit. When a sigma factor is associated with the core the holoenzyme is formed, which can initiate transcription.

It carries out the reaction RNA(n) + a ribonucleoside 5'-triphosphate = RNA(n+1) + diphosphate. In terms of biological role, promotes RNA polymerase assembly. Latches the N- and C-terminal regions of the beta' subunit thereby facilitating its interaction with the beta and alpha subunits. In Psychromonas ingrahamii (strain DSM 17664 / CCUG 51855 / 37), this protein is DNA-directed RNA polymerase subunit omega.